Reading from the N-terminus, the 318-residue chain is Transaldolase (318 aa).

Lys132 functions as the Schiff-base intermediate with substrate in the catalytic mechanism.

This sequence belongs to the transaldolase family. Type 1 subfamily. Homodimer.

It is found in the cytoplasm. The catalysed reaction is D-sedoheptulose 7-phosphate + D-glyceraldehyde 3-phosphate = D-erythrose 4-phosphate + beta-D-fructose 6-phosphate. Its pathway is carbohydrate degradation; pentose phosphate pathway; D-glyceraldehyde 3-phosphate and beta-D-fructose 6-phosphate from D-ribose 5-phosphate and D-xylulose 5-phosphate (non-oxidative stage): step 2/3. Its function is as follows. Transaldolase is important for the balance of metabolites in the pentose-phosphate pathway. The polypeptide is Transaldolase (Shewanella loihica (strain ATCC BAA-1088 / PV-4)).